The primary structure comprises 183 residues: Capsid protein (183 aa).

The tract at residues 136–183 (NAPILSTLPETTVVRRRGRSPRRRTPSPRRRRSQSPRRRRSQSPASQC) is disordered. Residues 149–176 (VRRRGRSPRRRTPSPRRRRSQSPRRRRS) show a composition bias toward basic residues. S155, S162, and S170 each carry phosphoserine; by host. The stretch at 155–161 (SPRRRTP) is one 1; half-length repeat. Positions 155-177 (SPRRRTPSPRRRRSQSPRRRRSQ) are 3 X 8 AA repeats of S-P-R-R-R-[PR]-S-Q. The Bipartite nuclear localization signal motif lies at 158-175 (RRTPSPRRRRSQSPRRRR). 2 consecutive repeat copies span residues 162-169 (SPRRRRSQ) and 170-177 (SPRRRRSQ). Residues 177–183 (QSPASQC) are RNA binding.

It belongs to the orthohepadnavirus core antigen family. Homodimerizes, then multimerizes. Interacts with cytosol exposed regions of viral L glycoprotein present in the reticulum-to-Golgi compartment. Interacts with human FLNB. Phosphorylated form interacts with host importin alpha; this interaction depends on the exposure of the NLS, which itself depends upon genome maturation and/or phosphorylation of the capsid protein. Interacts with host NUP153. In terms of processing, phosphorylated by host SRPK1, SRPK2, and maybe protein kinase C or GAPDH. Phosphorylation is critical for pregenomic RNA packaging. Protein kinase C phosphorylation is stimulated by HBx protein and may play a role in transport of the viral genome to the nucleus at the late step during the viral replication cycle.

The protein localises to the virion. The protein resides in the host cytoplasm. In terms of biological role, self assembles to form an icosahedral capsid. Most capsids appear to be large particles with an icosahedral symmetry of T=4 and consist of 240 copies of capsid protein, though a fraction forms smaller T=3 particles consisting of 180 capsid proteins. Entering capsids are transported along microtubules to the nucleus. Phosphorylation of the capsid is thought to induce exposure of nuclear localization signal in the C-terminal portion of the capsid protein that allows binding to the nuclear pore complex via the importin (karyopherin-) alpha and beta. Capsids are imported in intact form through the nuclear pore into the nuclear basket, where it probably binds NUP153. Only capsids that contain the mature viral genome can release the viral DNA and capsid protein into the nucleoplasm. Immature capsids get stuck in the basket. Capsids encapsulate the pre-genomic RNA and the P protein. Pre-genomic RNA is reverse-transcribed into DNA while the capsid is still in the cytoplasm. The capsid can then either be directed to the nucleus, providing more genomes for transcription, or bud through the endoplasmic reticulum to provide new virions. This is Capsid protein from Hylobatidae (gibbons).